A 566-amino-acid polypeptide reads, in one-letter code: Transcription factor P14E8.02 (566 aa).

The segment at 1 to 32 (MNISSQNVLLPSPIPSSSPMASHKKSWLSKHP) is disordered. Ser73 bears the Phosphoserine mark. Residues 86–137 (NKIGRSSQQCDHVLSTVDKAISRVHAIVTCTQDRMIIECVGWNGMIVSDKMR) form the FHA domain. Disordered regions lie at residues 191 to 217 (EENR…SQDY), 269 to 291 (DCSK…LLNG), 312 to 334 (ESDD…IEES), and 364 to 437 (FTNH…TKEN). A compositionally biased stretch (acidic residues) spans 314 to 330 (DDLDKNEEISEGEEYTP). Polar residues-rich tracts occupy residues 373-383 (NSNITTSNDSP) and 414-428 (DENT…PSSH). Phosphoserine is present on residues Ser379 and Ser382.

It belongs to the PLM2/TOS4 family.

It localises to the nucleus. Its function is as follows. Probable transcriptional regulatory protein Required for G1/S progression. The sequence is that of Transcription factor P14E8.02 from Schizosaccharomyces pombe (strain 972 / ATCC 24843) (Fission yeast).